The following is a 161-amino-acid chain: Peroxynitrite isomerase 2 (161 aa).

Residues 17 to 23 (GTWAGQG) carry the GXWXGXG motif. H152 is a binding site for heme b.

It belongs to the nitrobindin family. In terms of assembly, homodimer. Heme b is required as a cofactor.

The enzyme catalyses peroxynitrite = nitrate. It participates in nitrogen metabolism. Functionally, heme-binding protein able to scavenge peroxynitrite and to protect free L-tyrosine against peroxynitrite-mediated nitration, by acting as a peroxynitrite isomerase that converts peroxynitrite to nitrate. Therefore, this protein likely plays a role in peroxynitrite sensing and in the detoxification of reactive nitrogen and oxygen species (RNS and ROS, respectively). Is able to bind nitric oxide (NO) in vitro, but may act as a sensor of peroxynitrite levels in vivo. This is Peroxynitrite isomerase 2 from Mycobacterium ulcerans (strain Agy99).